Consider the following 232-residue polypeptide: Uracil-DNA glycosylase (232 aa).

Asp71 functions as the Proton acceptor in the catalytic mechanism.

This sequence belongs to the uracil-DNA glycosylase (UDG) superfamily. UNG family.

It is found in the cytoplasm. The catalysed reaction is Hydrolyzes single-stranded DNA or mismatched double-stranded DNA and polynucleotides, releasing free uracil.. In terms of biological role, excises uracil residues from the DNA which can arise as a result of misincorporation of dUMP residues by DNA polymerase or due to deamination of cytosine. The polypeptide is Uracil-DNA glycosylase (Azotobacter vinelandii (strain DJ / ATCC BAA-1303)).